A 353-amino-acid polypeptide reads, in one-letter code: 3'-5' exonuclease (353 aa).

The disordered stretch occupies residues 1-119; it reads MEKYLTKMPI…PSPEKEKPEK (119 aa). Basic and acidic residues-rich tracts occupy residues 13–30 and 37–50; these read KANE…ETPK and KKDT…KENA. Residues 59 to 70 show a composition bias toward basic residues; it reads TKGRPGRPAAKR. Basic and acidic residues predominate over residues 71-90; it reads KNLDTPDVTEKLAMEEENPP. 3 positions are modified to phosphoserine: Ser-103, Ser-109, and Ser-111. The 3'-5' exonuclease domain maps to 145–313; the sequence is VLQWVEKQKD…GQVIYRELER (169 aa). Positions 162, 164, and 300 each coordinate Mg(2+).

This sequence belongs to the WRNexo family.

Its subcellular location is the nucleus. Its function is as follows. Has exonuclease activity on both single-stranded and duplex templates bearing overhangs, but not blunt ended duplex DNA, and cleaves in a 3'-5' direction. Essential for the formation of DNA replication focal centers. Has an important role in maintaining genome stability. In Drosophila melanogaster (Fruit fly), this protein is 3'-5' exonuclease.